The sequence spans 276 residues: Large ribosomal subunit protein uL2 (276 aa).

The tract at residues 224-276 is disordered; the sequence is AMNPIDHPHGGGEGKTSGGRNPVTPWGVPTKGKKTRKRNKSSNKYIKRVSDKG. A compositionally biased stretch (basic residues) spans 254 to 270; the sequence is KGKKTRKRNKSSNKYIK.

Belongs to the universal ribosomal protein uL2 family. As to quaternary structure, part of the 50S ribosomal subunit. Forms a bridge to the 30S subunit in the 70S ribosome.

Its function is as follows. One of the primary rRNA binding proteins. Required for association of the 30S and 50S subunits to form the 70S ribosome, for tRNA binding and peptide bond formation. It has been suggested to have peptidyltransferase activity; this is somewhat controversial. Makes several contacts with the 16S rRNA in the 70S ribosome. This Ehrlichia canis (strain Jake) protein is Large ribosomal subunit protein uL2.